Reading from the N-terminus, the 179-residue chain is Photosystem I assembly protein Ycf3 (179 aa).

TPR repeat units lie at residues 29–62, 66–99, and 126–159; these read AFSYYRAGMSAQSEGKYAEALENYYEALQLEEDP, SYTLYNIGLIYGNNGNYSQALEYYHQALELNSNL, and NLEIRNDEYLELAKEFFDKAAEYWRQALKLAPDN.

The protein belongs to the Ycf3 family.

The protein resides in the plastid. The protein localises to the chloroplast thylakoid membrane. Essential for the assembly of the photosystem I (PSI) complex. May act as a chaperone-like factor to guide the assembly of the PSI subunits. This is Photosystem I assembly protein Ycf3 from Trieres chinensis (Marine centric diatom).